Here is a 187-residue protein sequence, read N- to C-terminus: Putative gamma-glutamylcyclotransferase At3g02910 (187 aa).

Tyr-17–Leu-20 contributes to the substrate binding site. Glu-92 (proton acceptor) is an active-site residue.

The protein belongs to the gamma-glutamylcyclotransferase family.

Putative gamma-glutamylcyclotransferase. This chain is Putative gamma-glutamylcyclotransferase At3g02910, found in Arabidopsis thaliana (Mouse-ear cress).